The primary structure comprises 145 residues: D-aminoacyl-tRNA deacylase (145 aa).

The Gly-cisPro motif, important for rejection of L-amino acids motif lies at 137-138 (GP).

The protein belongs to the DTD family. Homodimer.

The protein localises to the cytoplasm. It carries out the reaction glycyl-tRNA(Ala) + H2O = tRNA(Ala) + glycine + H(+). The catalysed reaction is a D-aminoacyl-tRNA + H2O = a tRNA + a D-alpha-amino acid + H(+). Functionally, an aminoacyl-tRNA editing enzyme that deacylates mischarged D-aminoacyl-tRNAs. Also deacylates mischarged glycyl-tRNA(Ala), protecting cells against glycine mischarging by AlaRS. Acts via tRNA-based rather than protein-based catalysis; rejects L-amino acids rather than detecting D-amino acids in the active site. By recycling D-aminoacyl-tRNA to D-amino acids and free tRNA molecules, this enzyme counteracts the toxicity associated with the formation of D-aminoacyl-tRNA entities in vivo and helps enforce protein L-homochirality. In Proteus mirabilis (strain HI4320), this protein is D-aminoacyl-tRNA deacylase.